We begin with the raw amino-acid sequence, 275 residues long: uncharacterized protein (275 aa).

NADPH is bound at residue Asp-45. Catalysis depends on proton donor residues Tyr-50 and His-111. NADPH contacts are provided by Ser-139, Gln-162, Leu-191, Lys-196, Ser-232, Ser-233, and Arg-237.

This sequence belongs to the aldo/keto reductase family.

The protein localises to the cytoplasm. It is found in the nucleus. This is an uncharacterized protein from Schizosaccharomyces pombe (strain 972 / ATCC 24843) (Fission yeast).